The sequence spans 33 residues: Suppressor protein HFN40 (33 aa).

In terms of biological role, suppresses expansion of husk leaf blades. The sequence is that of Suppressor protein HFN40 from Zea mays (Maize).